Consider the following 925-residue polypeptide: MLSIQQRYNICLMAERHPKWTQLELAKWAYETFQLPKIPSQGTISRLLARKSTYMNCKEHEKDANRLRKPNNLLVRKILQEWISQSLWNGIPITSPIIQDTAQAVWHRIPAEHREGNGSFSYKWISNFLSKMDVNISVLDEELPKTPKVWTFEERDVLKAYFSKIPPKDLFTLDEAFLSYNLPLDYAQYEASSIQRRIEVATVMLCSNLDGSEKLKPVVVGKYDSYKSFRNYFPNEPNDPVSQSMLGTKMAKKFDISYHSNRKAWLTSNLFHNWLVRWDKRLVAVNRKIWIVLDDSCCHRIINLRLQNIKLVYTSSNSKFLPFNWGVWDEFKTRYRIQQYQALIDLQNRISKNIQNKNKSERNECIPNGKKCLISFEQSQLTMSNAFKFIKKAWDDIPVDAIKANWKSSGLLPPEMIHLNENVSMAFKKNEVLESVLNRLCDEYYCVKKWEYEMLLDLNIENKNTNFLSTEELVESAIVEPCEPDFDTAPKGNEVHDDNFDVSVFANEDDNNQNHLSMSQASHNPDYNSNHSNNAIENTNNRGSNNNNNNNGSSNNINDNDSSVKYLQQNTVDNSTKTGNPGQPNISSMESQRNSSTTDLVVDGNYDVNFNGLLNDPYNTMKQPGPLDYNVSTLIDKPNLFLSPDLDLSTVGVDMQLPSSEYFSEVFSSAIRNNEKAASDQNKSTDELPSSTAMANSNSITTALLESRNQAQPFDVPHMNGLLSDTSKSGHSVNSSNAISQNSLNNFQHNSASVAEASSPSITPSPVAINSTGAPARSIISAPIDSNSSASSPSALEHLEGAVSGMSPSSTTILSNLQTNINIAKSLSTIMKHAESNEISLTKETINELNFNYLTLLKRIKKTRKQLNSESIKINSKNAQDHLETLLSGAAAAAATSANNLDLPTGGSNLPDSNNLHLPGNTGFF.

Residues D63–V138 form the HTH CENPB-type domain. 3 disordered regions span residues D510–S596, N674–A693, and P904–F925. Positions Q513–E537 are enriched in polar residues. Positions N538 to S563 are enriched in low complexity. Positions K565 to S596 are enriched in polar residues. Positions N674–D686 are enriched in basic and acidic residues. The span at P904–L916 shows a compositional bias: polar residues.

Essential for the synthesis of pyruvate decarboxylase. May be important for a high basal level of PDC gene expression or play a positive role in the autoregulation control of PDC1 and PDC5. In Saccharomyces cerevisiae (strain ATCC 204508 / S288c) (Baker's yeast), this protein is Protein PDC2 (PDC2).